The primary structure comprises 852 residues: Protein SEY1 (852 aa).

At 1–738 (MNGHFAAVGN…KRSAIGGITQ (738 aa)) the chain is on the cytoplasmic side. The GB1/RHD3-type G domain occupies 47 to 283 (GFNYHLISVF…FVGGVFLPEY (237 aa)). 57–64 (GSQSTGKS) is a GTP binding site. Residues 475–500 (QYRLFEKELDEVSARLRKEEMRRLAI) are a coiled coil. The chain crosses the membrane as a helical span at residues 739–759 (VPLYFYIVLLIFGWNEIVMVL). Over 760-762 (RNP) the chain is Lumenal. A helical membrane pass occupies residues 763 to 783 (MLFMLLLVMGGGTYVAYTLNL). The Cytoplasmic segment spans residues 784-852 (LGPMMQMANA…AQEVEEDDDI (69 aa)). Positions 825–852 (RSQDNGIGMDRLDSRGKKAQEVEEDDDI) are disordered. Over residues 834–845 (DRLDSRGKKAQE) the composition is skewed to basic and acidic residues.

It belongs to the TRAFAC class dynamin-like GTPase superfamily. GB1/RHD3 GTPase family. RHD3 subfamily.

It localises to the endoplasmic reticulum membrane. Its function is as follows. Cooperates with the reticulon proteins and tubule-shaping DP1 family proteins to generate and maintain the structure of the tubular endoplasmic reticulum network. Has GTPase activity, which is required for its function in ER organization. This chain is Protein SEY1, found in Chaetomium globosum (strain ATCC 6205 / CBS 148.51 / DSM 1962 / NBRC 6347 / NRRL 1970) (Soil fungus).